Consider the following 116-residue polypeptide: Iron-sulfur cluster insertion protein ErpA (116 aa).

3 residues coordinate iron-sulfur cluster: C44, C108, and C110.

This sequence belongs to the HesB/IscA family. Homodimer. Requires iron-sulfur cluster as cofactor.

Required for insertion of 4Fe-4S clusters for at least IspG. This Pseudomonas fluorescens (strain ATCC BAA-477 / NRRL B-23932 / Pf-5) protein is Iron-sulfur cluster insertion protein ErpA.